Here is an 826-residue protein sequence, read N- to C-terminus: Glycerol-3-phosphate acyltransferase 1, mitochondrial (826 aa).

Topologically, residues 1–87 (MDESALTLGT…FFNPSIPSLG (87 aa)) are cytoplasmic. Residues 80 to 120 (NPSIPSLGLRNVIYINETHTRHRGWLARRLSYVLFIQERDV) form an important for mitochondrial localization region. Residues 88–118 (LRNVIYINETHTRHRGWLARRLSYVLFIQER) lie within the membrane without spanning it. Residues 119 to 826 (DVHKGMFATN…LEYILSFVVL (708 aa)) are Cytoplasmic-facing. The HXXXXD motif motif lies at 230 to 235 (HRSHID). CoA contacts are provided by arginine 278, arginine 279, lysine 288, arginine 293, and arginine 328. Phosphoserine is present on serine 380. Arginine 462 contributes to the CoA binding site. Phosphoserine is present on residues serine 686 and serine 693. N6-acetyllysine is present on residues lysine 778 and lysine 782.

Belongs to the GPAT/DAPAT family.

The protein resides in the mitochondrion outer membrane. The enzyme catalyses sn-glycerol 3-phosphate + an acyl-CoA = a 1-acyl-sn-glycero-3-phosphate + CoA. It catalyses the reaction (9Z,12Z)-octadecadienoyl-CoA + sn-glycerol 3-phosphate = 1-(9Z,12Z)-octadecadienoyl-sn-glycero-3-phosphate + CoA. The catalysed reaction is sn-glycerol 3-phosphate + (9Z)-octadecenoyl-CoA = 1-(9Z-octadecenoyl)-sn-glycero-3-phosphate + CoA. It carries out the reaction sn-glycerol 3-phosphate + octadecanoyl-CoA = 1-octadecanoyl-sn-glycero-3-phosphate + CoA. The enzyme catalyses sn-glycerol 3-phosphate + hexadecanoyl-CoA = 1-hexadecanoyl-sn-glycero-3-phosphate + CoA. It catalyses the reaction dodecanoyl-CoA + sn-glycerol 3-phosphate = 1-dodecanoyl-sn-glycerol 3-phosphate + CoA. The catalysed reaction is 1-acyl-sn-glycero-3-phospho-(1'-sn-glycerol) + an acyl-CoA = a 1,2-diacyl-sn-glycero-3-phospho-(1'-sn-glycerol) + CoA. Its pathway is phospholipid metabolism; CDP-diacylglycerol biosynthesis; CDP-diacylglycerol from sn-glycerol 3-phosphate: step 1/3. Its function is as follows. Mitochondrial membrane protein that catalyzes the essential first step of biosynthesis of glycerolipids such as triglycerides, phosphatidic acids and lysophosphatidic acids. Esterifies acyl-group from acyl-coenzyme A (acyl-CoA) to the sn-1 position of glycerol-3-phosphate, to produce lysophosphatidic acid. Has a narrow hydrophobic binding cleft that selects for a linear acyl chain. Catalytic activity is higher for substrates with a 16-carbon acyl chain. The protein is Glycerol-3-phosphate acyltransferase 1, mitochondrial of Sus scrofa (Pig).